A 273-amino-acid chain; its full sequence is MAIHLYKTSTPSTRNGAVDGQVKSNPRNNLIYGQHHCSKGRNARGIITARHRGGGHKRLYRKIDFRRNEKDISGRIVTIEYDPNRNAYICLIHYGDGEKRYILHPRGAIIGDTIVSGTEVPISMGNALPLTDMPLGTAIHNIEITLGKGGQLARAAGAVAKLIAKEGKSATLRLPSGEVRLISKNCSATVGQVGNVGVNQKSLGRAGSKRWLGKRPVVRGVVMNPVDHPHGGGEGRAPIGRKKPTTPWGYPALGRRSRKRNKYSDSFILRRRK.

Residues 223–273 (MNPVDHPHGGGEGRAPIGRKKPTTPWGYPALGRRSRKRNKYSDSFILRRRK) form a disordered region.

This sequence belongs to the universal ribosomal protein uL2 family. As to quaternary structure, part of the 50S ribosomal subunit.

The protein localises to the plastid. The protein resides in the chloroplast. This Calycanthus floridus var. glaucus (Eastern sweetshrub) protein is Large ribosomal subunit protein uL2c (rpl2).